Here is a 150-residue protein sequence, read N- to C-terminus: Male-specific protein scotti (150 aa).

The interval 60-84 (PPMAVFPARGGPNGGPPRLRKKRSF) is disordered. Residue Asn131 is glycosylated (N-linked (GlcNAc...) asparagine).

It belongs to the male-specific scotti family.

Functionally, post-meiotically transcribed gene that has a role in late spermiogenesis; required for actin cone progression during spermatid individualization. The sequence is that of Male-specific protein scotti from Drosophila yakuba (Fruit fly).